A 215-amino-acid chain; its full sequence is Disulfide-bond oxidoreductase YfcG (215 aa).

Residues 1-87 enclose the GST N-terminal domain; it reads MIDLYFAPTP…YLAEKTGLFL (87 aa). Residues N11, Q38, R40, I52, 71–72, and R132 each bind glutathione; that span reads ES. A GST C-terminal domain is found at 90 to 215; the sequence is ETRERAATLQ…AQLGDERSDS (126 aa).

The protein belongs to the GST superfamily. Nu-class GSH transferase family. As to quaternary structure, homodimer.

Functionally, exhibits a very robust glutathione (GSH)-dependent disulfide-bond reductase activity toward the model substrate, 2-hydroxyethyl disulfide; the actual physiological substrates are not known. Also has a low GSH-dependent hydroperoxidase activity toward cumene hydroperoxide, but does not reduce H(2)O(2), tert-butyl hydroperoxide, benzyl peroxide, or lauroyl peroxide. Exhibits little or no GSH transferase activity with most typical electrophilic substrates, and has no detectable transferase activity using glutathionylspermidine (GspSH) as the nucleophilic substrate. Is involved in defense against oxidative stress, probably via its peroxidase activity. In Escherichia coli (strain K12), this protein is Disulfide-bond oxidoreductase YfcG (yfcG).